A 446-amino-acid chain; its full sequence is Protein odr-4 homolog (446 aa).

A helical membrane pass occupies residues 76–96 (ASQVGRMLPGGLMVLGVFLMT). Residues 394 to 415 (HPEKRESEPASQHLESKPENKA) are compositionally biased toward basic and acidic residues. Positions 394–417 (HPEKRESEPASQHLESKPENKARS) are disordered. Residues 426 to 446 (GLVISTIVASIAIIISFYYIM) traverse the membrane as a helical segment.

This sequence belongs to the ODR-4 family.

It is found in the membrane. In terms of biological role, may play a role in the trafficking of a subset of G-protein coupled receptors. This chain is Protein odr-4 homolog (odr4), found in Xenopus laevis (African clawed frog).